An 886-amino-acid polypeptide reads, in one-letter code: Alanine--tRNA ligase (886 aa).

The Zn(2+) site is built by histidine 568, histidine 572, cysteine 670, and histidine 674.

The protein belongs to the class-II aminoacyl-tRNA synthetase family. Zn(2+) is required as a cofactor.

It is found in the cytoplasm. It carries out the reaction tRNA(Ala) + L-alanine + ATP = L-alanyl-tRNA(Ala) + AMP + diphosphate. Its function is as follows. Catalyzes the attachment of alanine to tRNA(Ala) in a two-step reaction: alanine is first activated by ATP to form Ala-AMP and then transferred to the acceptor end of tRNA(Ala). Also edits incorrectly charged Ser-tRNA(Ala) and Gly-tRNA(Ala) via its editing domain. In Prochlorococcus marinus (strain NATL2A), this protein is Alanine--tRNA ligase.